We begin with the raw amino-acid sequence, 166 residues long: Cyanate hydratase (166 aa).

Residues arginine 106, glutamate 109, and serine 132 contribute to the active site.

The protein belongs to the cyanase family.

It catalyses the reaction cyanate + hydrogencarbonate + 3 H(+) = NH4(+) + 2 CO2. Its function is as follows. Catalyzes the reaction of cyanate with bicarbonate to produce ammonia and carbon dioxide. The chain is Cyanate hydratase from Verticillium alfalfae (strain VaMs.102 / ATCC MYA-4576 / FGSC 10136) (Verticillium wilt of alfalfa).